The sequence spans 163 residues: Shikimate kinase (163 aa).

ATP is bound at residue 10-15 (GVGKTT). Threonine 14 lines the Mg(2+) pocket. 3 residues coordinate substrate: aspartate 28, arginine 52, and glycine 75. Arginine 116 contributes to the ATP binding site. Arginine 134 lines the substrate pocket. Arginine 151 provides a ligand contact to ATP.

It belongs to the shikimate kinase family. In terms of assembly, monomer. The cofactor is Mg(2+).

It localises to the cytoplasm. It catalyses the reaction shikimate + ATP = 3-phosphoshikimate + ADP + H(+). It participates in metabolic intermediate biosynthesis; chorismate biosynthesis; chorismate from D-erythrose 4-phosphate and phosphoenolpyruvate: step 5/7. Catalyzes the specific phosphorylation of the 3-hydroxyl group of shikimic acid using ATP as a cosubstrate. This is Shikimate kinase from Streptococcus pyogenes serotype M49 (strain NZ131).